A 171-amino-acid chain; its full sequence is 3-hydroxydecanoyl-[acyl-carrier-protein] dehydratase (171 aa).

His70 is an active-site residue.

This sequence belongs to the thioester dehydratase family. FabA subfamily. In terms of assembly, homodimer.

Its subcellular location is the cytoplasm. The enzyme catalyses a (3R)-hydroxyacyl-[ACP] = a (2E)-enoyl-[ACP] + H2O. The catalysed reaction is (3R)-hydroxydecanoyl-[ACP] = (2E)-decenoyl-[ACP] + H2O. It catalyses the reaction (2E)-decenoyl-[ACP] = (3Z)-decenoyl-[ACP]. Its pathway is lipid metabolism; fatty acid biosynthesis. Its function is as follows. Necessary for the introduction of cis unsaturation into fatty acids. Catalyzes the dehydration of (3R)-3-hydroxydecanoyl-ACP to E-(2)-decenoyl-ACP and then its isomerization to Z-(3)-decenoyl-ACP. Can catalyze the dehydratase reaction for beta-hydroxyacyl-ACPs with saturated chain lengths up to 16:0, being most active on intermediate chain length. The chain is 3-hydroxydecanoyl-[acyl-carrier-protein] dehydratase from Nitrosococcus oceani (strain ATCC 19707 / BCRC 17464 / JCM 30415 / NCIMB 11848 / C-107).